The chain runs to 663 residues: Protein pat-12 (663 aa).

Polar residues predominate over residues Met-1–Ser-15. Disordered stretches follow at residues Met-1 to Tyr-78, Arg-367 to Thr-430, Phe-517 to Arg-546, and Pro-597 to Arg-663. The span at Arg-367–Arg-380 shows a compositional bias: basic and acidic residues. Residues Val-381–His-400 show a composition bias toward basic residues. Residues Phe-517–Ser-526 are compositionally biased toward polar residues. 2 stretches are compositionally biased toward basic and acidic residues: residues Phe-620–Asp-640 and Asn-649–Arg-663.

Interacts with vab-10 (via plankin domain). Isoform a: Expressed in the uterus, the vulva, the rectum, mechanosensory neurons and in head and tail neurons. Isoform e: Expressed in spermatheca and weakly in the vulva. Isoform f: Expressed in spermatheca and weakly in the vulva. Isoform i: Expressed in spermatheca and weakly in the vulva.

It is found in the apical cell membrane. The protein resides in the basal cell membrane. Its subcellular location is the cytoplasm. The protein localises to the cell junction. It localises to the hemidesmosome. It is found in the cell membrane. The protein resides in the cytoskeleton. Its function is as follows. Required for embryonic morphology and development. Plays both a functional and a structural role in the maintenance and probably biogenesis of fibrous organelles, a hemidesomosome-like junction structure, which ensures muscle stability and muscle connection to the external cuticle. The protein is Protein pat-12 of Caenorhabditis elegans.